The following is a 275-amino-acid chain: 2,3,4,5-tetrahydropyridine-2,6-dicarboxylate N-succinyltransferase (275 aa).

2 residues coordinate substrate: R106 and D143.

The protein belongs to the transferase hexapeptide repeat family. As to quaternary structure, homotrimer.

Its subcellular location is the cytoplasm. The catalysed reaction is (S)-2,3,4,5-tetrahydrodipicolinate + succinyl-CoA + H2O = (S)-2-succinylamino-6-oxoheptanedioate + CoA. The protein operates within amino-acid biosynthesis; L-lysine biosynthesis via DAP pathway; LL-2,6-diaminopimelate from (S)-tetrahydrodipicolinate (succinylase route): step 1/3. The chain is 2,3,4,5-tetrahydropyridine-2,6-dicarboxylate N-succinyltransferase from Ralstonia nicotianae (strain ATCC BAA-1114 / GMI1000) (Ralstonia solanacearum).